Consider the following 938-residue polypeptide: AP-2 complex subunit alpha-2 (938 aa).

A 1,2-diacyl-sn-glycero-3-phospho-(1D-myo-inositol-3,4,5-trisphosphate) is bound by residues 11–12 (RG), Lys-43, Tyr-53, and 57–61 (KYVCK). Residues 616–677 (LKKKKGPSTV…APPVPAGPPP (62 aa)) are disordered. Residues 645-668 (PALASTSAVSTPSPSADLLGLGAA) show a composition bias toward low complexity.

It belongs to the adaptor complexes large subunit family. In terms of assembly, adaptor protein complex 2 (AP-2) is a heterotetramer composed of two large adaptins (alpha-type subunit AP2A1 or AP2A2 and beta-type subunit AP2B1), a medium adaptin (mu-type subunit AP2M1) and a small adaptin (sigma-type subunit AP2S1). Binds clathrin. Binds EPN1, EPS15, AMPH, SNAP91 and BIN1. Interacts with HIP1. Interacts with DGKD. Interacts with DENND1A, DENND1B and DENND1C. Interacts with FCHO1. Interacts with ATAT1; this interaction is required for efficient alpha-tubulin acetylation by ATAT1. Interacts with KIAA1107. Together with AP2B1 and AP2M1, it interacts with ADAM10; this interaction facilitates ADAM10 endocytosis from the plasma membrane during long-term potentiation in hippocampal neurons. Interacts with CLN3 (via dileucine motif). Interacts with ABCB11; this interaction regulates cell membrane expression of ABCB11 through its internalization in a clathrin-dependent manner and its subsequent degradation. Interacts with DNAJC6.

The protein resides in the cell membrane. Its subcellular location is the membrane. It localises to the coated pit. Functionally, component of the adaptor protein complex 2 (AP-2). Adaptor protein complexes function in protein transport via transport vesicles in different membrane traffic pathways. Adaptor protein complexes are vesicle coat components and appear to be involved in cargo selection and vesicle formation. AP-2 is involved in clathrin-dependent endocytosis in which cargo proteins are incorporated into vesicles surrounded by clathrin (clathrin-coated vesicles, CCVs) which are destined for fusion with the early endosome. The clathrin lattice serves as a mechanical scaffold but is itself unable to bind directly to membrane components. Clathrin-associated adaptor protein (AP) complexes which can bind directly to both the clathrin lattice and to the lipid and protein components of membranes are considered to be the major clathrin adaptors contributing the CCV formation. AP-2 also serves as a cargo receptor to selectively sort the membrane proteins involved in receptor-mediated endocytosis. AP-2 seems to play a role in the recycling of synaptic vesicle membranes from the presynaptic surface. AP-2 recognizes Y-X-X-[FILMV] (Y-X-X-Phi) and [ED]-X-X-X-L-[LI] endocytosis signal motifs within the cytosolic tails of transmembrane cargo molecules. AP-2 may also play a role in maintaining normal post-endocytic trafficking through the ARF6-regulated, non-clathrin pathway. During long-term potentiation in hippocampal neurons, AP-2 is responsible for the endocytosis of ADAM10. The AP-2 alpha subunit binds polyphosphoinositide-containing lipids, positioning AP-2 on the membrane. The AP-2 alpha subunit acts via its C-terminal appendage domain as a scaffolding platform for endocytic accessory proteins. The AP-2 alpha and AP-2 sigma subunits are thought to contribute to the recognition of the [ED]-X-X-X-L-[LI] motif. This chain is AP-2 complex subunit alpha-2, found in Bos taurus (Bovine).